Consider the following 191-residue polypeptide: Thioredoxin F-type, chloroplastic (191 aa).

Residues 68 to 190 form the Thioredoxin domain; sequence KASLETAVGA…LVAAIEAARS (123 aa). Residues cysteine 115 and cysteine 118 each act as nucleophile in the active site. Cysteines 115 and 118 form a disulfide.

This sequence belongs to the thioredoxin family. Plant F-type subfamily. In terms of assembly, forms a complex with heterodimeric ferredoxin-thioredoxin reductase (FTR) and ferredoxin.

It is found in the plastid. It localises to the chloroplast. Its function is as follows. Participates in various redox reactions through the reversible oxidation of the active center dithiol to a disulfide. The F form is known to activate a number of enzymes of the photosynthetic carbon cycle. This is Thioredoxin F-type, chloroplastic from Mesembryanthemum crystallinum (Common ice plant).